The sequence spans 353 residues: Phospho-N-acetylmuramoyl-pentapeptide-transferase (353 aa).

Helical transmembrane passes span 24-44 (LGFF…ILWA), 66-86 (TPTM…LLCA), 88-108 (LGNP…FVGF), 129-149 (FGML…KGLD), 160-180 (PLFE…FLSA), 192-212 (GLAS…VYVA), 229-249 (VGEL…FLWY), 256-276 (VFMG…NAIV), 281-301 (ILLV…ILQV), and 330-350 (KVIV…LLSL).

This sequence belongs to the glycosyltransferase 4 family. MraY subfamily. Mg(2+) serves as cofactor.

It is found in the cell inner membrane. It catalyses the reaction UDP-N-acetyl-alpha-D-muramoyl-L-alanyl-gamma-D-glutamyl-meso-2,6-diaminopimeloyl-D-alanyl-D-alanine + di-trans,octa-cis-undecaprenyl phosphate = di-trans,octa-cis-undecaprenyl diphospho-N-acetyl-alpha-D-muramoyl-L-alanyl-D-glutamyl-meso-2,6-diaminopimeloyl-D-alanyl-D-alanine + UMP. Its pathway is cell wall biogenesis; peptidoglycan biosynthesis. Catalyzes the initial step of the lipid cycle reactions in the biosynthesis of the cell wall peptidoglycan: transfers peptidoglycan precursor phospho-MurNAc-pentapeptide from UDP-MurNAc-pentapeptide onto the lipid carrier undecaprenyl phosphate, yielding undecaprenyl-pyrophosphoryl-MurNAc-pentapeptide, known as lipid I. The chain is Phospho-N-acetylmuramoyl-pentapeptide-transferase from Helicobacter acinonychis (strain Sheeba).